Consider the following 461-residue polypeptide: Argininosuccinate lyase (461 aa).

This sequence belongs to the lyase 1 family. Argininosuccinate lyase subfamily.

The protein resides in the cytoplasm. It carries out the reaction 2-(N(omega)-L-arginino)succinate = fumarate + L-arginine. It functions in the pathway amino-acid biosynthesis; L-arginine biosynthesis; L-arginine from L-ornithine and carbamoyl phosphate: step 3/3. This chain is Argininosuccinate lyase, found in Bacillus subtilis (strain 168).